We begin with the raw amino-acid sequence, 570 residues long: Interleukin-1 receptor accessory protein (570 aa).

A signal peptide spans 1 to 20 (MTLLWCVVSLYFYGILQSDA). 3 Ig-like C2-type domains span residues 21–128 (SERC…VAFP), 141–230 (PMKL…RTLT), and 242–348 (PPVI…AKVK). The Extracellular portion of the chain corresponds to 21–367 (SERCDDWGLD…VELACGFGAT (347 aa)). 5 disulfide bridges follow: Cys24–Cys122, Cys47–Cys114, Cys137–Cys181, Cys160–Cys212, and Cys266–Cys332. An N-linked (GlcNAc...) asparagine glycan is attached at Asn57. Positions 69 to 85 (IWYWTRQDRDLEEPINF) are essential for interaction with PTPRD. Asn107, Asn111, and Asn118 each carry an N-linked (GlcNAc...) asparagine glycan. Asn196, Asn209, and Asn299 each carry an N-linked (GlcNAc...) asparagine glycan. Residues 368–388 (VLLVVILIVVYHVYWLEMVLF) traverse the membrane as a helical segment. Residues 389–570 (YRAHFGTDET…GLSYSSLKNV (182 aa)) lie on the Cytoplasmic side of the membrane. Residues 403-546 (KEYDIYVSYA…RFWKQLQVAM (144 aa)) form the TIR domain. The active site involves Glu482. The disordered stretch occupies residues 549-570 (KKSPRRSSSDEQGLSYSSLKNV). Position 557 is a phosphoserine (Ser557). Residues 558–570 (DEQGLSYSSLKNV) show a composition bias toward polar residues.

This sequence belongs to the interleukin-1 receptor family. The interleukin-36 receptor complex is a heterodimer of IL1RL2 and IL1RAP; the association is inhibited by IL36RN. The interleukin-1 receptor complex is a heterodimer of IL1R1 and IL1RAP. Associates with IL1R2 to form a non-signaling interleukin-1 receptor complex. Isoform 4 interacts with IL1R1 in an interleukin-1-dependent manner. Interacts with IL-33-bound IL1RL1 to form the minimal interleukin-33 signaling complex with a 1:1:1 stoichiometry. Interacts with KIT (independently of stimulation with KITLG/SCF). A mast cell-specific KITLG/SCF-induced interleukin-33 signaling complex contains IL1RL1, IL1RAP, KIT and MYD88. Interacts (via the first immunoglobilin domain) with PTPRD (via the third immunoglobilin domain); induces pre- and postsynaptic differentiation of neurons. Detected in liver, skin, placenta, thymus and lung. Isoform 4 is predominantly expressed in brain. Overexpressed on candidate chronic myeloid leukemia (CML) stem cells, hematopoietic stem cells and mononuclear cells of patients with acute myeloid leukemia (AML). Overexpressed in patients with chronic obstructive pulmonary disease (COPD). Expressed in T-helper 1 (Th1) and T-helper 2 (Th2) cell subsets.

Its subcellular location is the cell membrane. The protein resides in the secreted. It catalyses the reaction NAD(+) + H2O = ADP-D-ribose + nicotinamide + H(+). Coreceptor for IL1RL2 in the IL-36 signaling system. Coreceptor with IL1R1 in the IL-1 signaling system. Associates with IL1R1 bound to IL1B to form the high affinity interleukin-1 receptor complex which mediates interleukin-1-dependent activation of NF-kappa-B and other pathways. Signaling involves the recruitment of adapter molecules such as TOLLIP, MYD88, and IRAK1 or IRAK2 via the respective TIR domains of the receptor/coreceptor subunits. Recruits TOLLIP to the signaling complex. Does not bind to interleukin-1 alone; binding of IL1RN to IL1R1, prevents its association with IL1R1 to form a signaling complex. The cellular response is modulated through a non-signaling association with the membrane IL1R2 decoy receptor. Coreceptor for IL1RL1 in the IL-33 signaling system. Can bidirectionally induce pre- and postsynaptic differentiation of neurons by trans-synaptically binding to PTPRD. May play a role in IL1B-mediated costimulation of IFNG production from T-helper 1 (Th1) cells. Functionally, associates with secreted ligand-bound IL1R2 and increases the affinity of secreted IL1R2 for IL1B; this complex formation may be the dominant mechanism for neutralization of IL1B by secreted/soluble receptors. Enhances the ability of secreted IL1R1 to inhibit IL-33 signaling. Its function is as follows. Unable to mediate canonical IL-1 signaling. Required for Src phosphorylation by IL1B. May be involved in IL1B-potentiated NMDA-induced calcium influx in neurons. This chain is Interleukin-1 receptor accessory protein (IL1RAP), found in Homo sapiens (Human).